A 243-amino-acid chain; its full sequence is Probable transcriptional regulatory protein TTE1135 (243 aa).

This sequence belongs to the TACO1 family.

The protein localises to the cytoplasm. The chain is Probable transcriptional regulatory protein TTE1135 from Caldanaerobacter subterraneus subsp. tengcongensis (strain DSM 15242 / JCM 11007 / NBRC 100824 / MB4) (Thermoanaerobacter tengcongensis).